A 61-amino-acid chain; its full sequence is Large ribosomal subunit protein bL32 (61 aa).

The span at 1-16 (MAVPKRKTSPSRRGMR) shows a compositional bias: basic residues. Residues 1–44 (MAVPKRKTSPSRRGMRRSADALKAPTYVEDKDSGELRRPHHIDL) are disordered. Residues 28-44 (VEDKDSGELRRPHHIDL) are compositionally biased toward basic and acidic residues.

Belongs to the bacterial ribosomal protein bL32 family.

This is Large ribosomal subunit protein bL32 from Methylobacterium nodulans (strain LMG 21967 / CNCM I-2342 / ORS 2060).